Reading from the N-terminus, the 101-residue chain is Putative septation protein SpoVG (101 aa).

The protein belongs to the SpoVG family.

Its function is as follows. Could be involved in septation. This chain is Putative septation protein SpoVG, found in Anaeromyxobacter dehalogenans (strain 2CP-C).